Consider the following 319-residue polypeptide: tRNA N6-adenosine threonylcarbamoyltransferase (319 aa).

His110 and His114 together coordinate Fe cation. Substrate is bound by residues 135–139 (VVSGG), Asp168, Gly181, Asp185, and Asn277. Asp301 contributes to the Fe cation binding site.

The protein belongs to the KAE1 / TsaD family. Fe(2+) serves as cofactor.

The protein resides in the cytoplasm. It catalyses the reaction L-threonylcarbamoyladenylate + adenosine(37) in tRNA = N(6)-L-threonylcarbamoyladenosine(37) in tRNA + AMP + H(+). In terms of biological role, required for the formation of a threonylcarbamoyl group on adenosine at position 37 (t(6)A37) in tRNAs that read codons beginning with adenine. Is involved in the transfer of the threonylcarbamoyl moiety of threonylcarbamoyl-AMP (TC-AMP) to the N6 group of A37, together with TsaE and TsaB. TsaD likely plays a direct catalytic role in this reaction. In Mycoplasma pneumoniae (strain ATCC 29342 / M129 / Subtype 1) (Mycoplasmoides pneumoniae), this protein is tRNA N6-adenosine threonylcarbamoyltransferase.